A 741-amino-acid polypeptide reads, in one-letter code: Mitofusin-1 (741 aa).

The Cytoplasmic portion of the chain corresponds to Met-1–Leu-584. Positions Lys-9–Arg-73 are part of a helix bundle domain, formed by helices from N-terminal and C-terminal regions. One can recognise a Dynamin-type G domain in the interval Ser-72–Glu-321. The segment at Gly-82–Ser-89 is G1 motif. Ser-85–Ser-90 contacts GTP. Residues Thr-108–Thr-109 form a G2 motif region. A G3 motif region spans residues Asp-178–Gly-181. Asn-237–Asp-240 serves as a coordination point for GTP. The segment at Asn-237–Asp-240 is G4 motif. Glu-266 is a region of interest (G5 motif). Residues Ser-284 and Lys-286 each coordinate GTP. A part of a helix bundle domain, formed by helices from N-terminal and C-terminal regions region spans residues Glu-338–Glu-364. Residues Glu-371–Lys-408 are a coiled coil. Residues Ile-585 to Val-605 traverse the membrane as a helical segment. Residues Ile-606 to Lys-608 are Mitochondrial intermembrane-facing. The helical transmembrane segment at Thr-609 to Glu-629 threads the bilayer. The Cytoplasmic portion of the chain corresponds to Arg-630 to Ser-741. Residues Phe-677–His-735 are a coiled coil. Residues Asp-703–Leu-734 are part of a helix bundle domain, formed by helices from N-terminal and C-terminal regions.

The protein belongs to the TRAFAC class dynamin-like GTPase superfamily. Dynamin/Fzo/YdjA family. Mitofusin subfamily. Homodimer, also in the absence of bound GTP. Forms higher oligomers in the presence of a transition state GTP analog. Forms homomultimers and heteromultimers with MFN2. Oligomerization is essential for mitochondrion fusion. Component of a high molecular weight multiprotein complex. Interacts with VAT1. Interacts with THG1L; THG1L probably functions as a guanyl-nucleotide exchange factor/GEF, activating MFN1. In terms of processing, ubiquitinated by MARCHF5. When mitochondria are depolarized and dysfunctional, it is ubiquitinated by a SCF (SKP1-CUL1-F-box protein) E3 ubiquitin-protein ligase complex that contains FBXO7 and PRKN. Ubiquitinated by non-degradative ubiquitin by PRKN, promoting mitochondrial fusion; deubiquitination by USP30 inhibits mitochondrial fusion. In terms of tissue distribution, detected in adult heart. Detected in embryos (at protein level). Widely expressed.

The protein resides in the mitochondrion outer membrane. The enzyme catalyses GTP + H2O = GDP + phosphate + H(+). In terms of biological role, mitochondrial outer membrane GTPase that mediates mitochondrial clustering and fusion. Membrane clustering requires GTPase activity. It may involve a major rearrangement of the coiled coil domains. Mitochondria are highly dynamic organelles, and their morphology is determined by the equilibrium between mitochondrial fusion and fission events. Overexpression induces the formation of mitochondrial networks (in vitro). Has low GTPase activity. The polypeptide is Mitofusin-1 (Mfn1) (Mus musculus (Mouse)).